We begin with the raw amino-acid sequence, 286 residues long: Phosphatidylserine decarboxylase proenzyme (286 aa).

Residues Asp90, His147, and Ser250 each act as charge relay system; for autoendoproteolytic cleavage activity in the active site. Ser250 serves as the catalytic Schiff-base intermediate with substrate; via pyruvic acid; for decarboxylase activity. A Pyruvic acid (Ser); by autocatalysis modification is found at Ser250.

The protein belongs to the phosphatidylserine decarboxylase family. PSD-B subfamily. Prokaryotic type I sub-subfamily. As to quaternary structure, heterodimer of a large membrane-associated beta subunit and a small pyruvoyl-containing alpha subunit. Requires pyruvate as cofactor. Is synthesized initially as an inactive proenzyme. Formation of the active enzyme involves a self-maturation process in which the active site pyruvoyl group is generated from an internal serine residue via an autocatalytic post-translational modification. Two non-identical subunits are generated from the proenzyme in this reaction, and the pyruvate is formed at the N-terminus of the alpha chain, which is derived from the carboxyl end of the proenzyme. The autoendoproteolytic cleavage occurs by a canonical serine protease mechanism, in which the side chain hydroxyl group of the serine supplies its oxygen atom to form the C-terminus of the beta chain, while the remainder of the serine residue undergoes an oxidative deamination to produce ammonia and the pyruvoyl prosthetic group on the alpha chain. During this reaction, the Ser that is part of the protease active site of the proenzyme becomes the pyruvoyl prosthetic group, which constitutes an essential element of the active site of the mature decarboxylase.

It localises to the cell membrane. It carries out the reaction a 1,2-diacyl-sn-glycero-3-phospho-L-serine + H(+) = a 1,2-diacyl-sn-glycero-3-phosphoethanolamine + CO2. The protein operates within phospholipid metabolism; phosphatidylethanolamine biosynthesis; phosphatidylethanolamine from CDP-diacylglycerol: step 2/2. In terms of biological role, catalyzes the formation of phosphatidylethanolamine (PtdEtn) from phosphatidylserine (PtdSer). The protein is Phosphatidylserine decarboxylase proenzyme of Saccharophagus degradans (strain 2-40 / ATCC 43961 / DSM 17024).